The chain runs to 166 residues: NADPH-dependent 7-cyano-7-deazaguanine reductase (166 aa).

Residue Cys57 is the Thioimide intermediate of the active site. Asp64 (proton donor) is an active-site residue. Substrate-binding positions include 79–81 (VES) and 98–99 (HE).

The protein belongs to the GTP cyclohydrolase I family. QueF type 1 subfamily.

It is found in the cytoplasm. It catalyses the reaction 7-aminomethyl-7-carbaguanine + 2 NADP(+) = 7-cyano-7-deazaguanine + 2 NADPH + 3 H(+). Its pathway is tRNA modification; tRNA-queuosine biosynthesis. Its function is as follows. Catalyzes the NADPH-dependent reduction of 7-cyano-7-deazaguanine (preQ0) to 7-aminomethyl-7-deazaguanine (preQ1). The protein is NADPH-dependent 7-cyano-7-deazaguanine reductase of Staphylococcus haemolyticus (strain JCSC1435).